The sequence spans 72 residues: Translation initiation factor IF-1 (72 aa).

The S1-like domain maps to 1-72; sequence MAKEDCIEMQ…SKARIIFRAR (72 aa).

It belongs to the IF-1 family. In terms of assembly, component of the 30S ribosomal translation pre-initiation complex which assembles on the 30S ribosome in the order IF-2 and IF-3, IF-1 and N-formylmethionyl-tRNA(fMet); mRNA recruitment can occur at any time during PIC assembly.

It localises to the cytoplasm. Functionally, one of the essential components for the initiation of protein synthesis. Stabilizes the binding of IF-2 and IF-3 on the 30S subunit to which N-formylmethionyl-tRNA(fMet) subsequently binds. Helps modulate mRNA selection, yielding the 30S pre-initiation complex (PIC). Upon addition of the 50S ribosomal subunit IF-1, IF-2 and IF-3 are released leaving the mature 70S translation initiation complex. This Actinobacillus pleuropneumoniae serotype 5b (strain L20) protein is Translation initiation factor IF-1.